A 427-amino-acid polypeptide reads, in one-letter code: V-type proton ATPase subunit C 2 (427 aa).

Positions 298 to 320 (PLGNPARPAAGQTDRDRESEGEG) are disordered.

It belongs to the V-ATPase C subunit family. As to quaternary structure, V-ATPase is a heteromultimeric enzyme made up of two complexes: the ATP-hydrolytic V1 complex and the proton translocation V0 complex. The V1 complex consists of three catalytic AB heterodimers that form a heterohexamer, three peripheral stalks each consisting of EG heterodimers, one central rotor including subunits D and F, and the regulatory subunits C and H. The proton translocation complex V0 consists of the proton transport subunit a, a ring of proteolipid subunits c9c'', rotary subunit d, subunits e and f, and the accessory subunits ATP6AP1/Ac45 and ATP6AP2/PRR. Predominantly expressed in the lung and kidney. Isoform 1 is lung-specific while isoform 3 is a kidney-specific isoform. Isoform 1 is localized in the lamellar bodies of type II alveolar cells. Isoform 2 is strongly expressed in the cortical and medulla collecting ducts and is found in the plasma membranes of renal alpha and beta intercalated cells.

In terms of biological role, subunit of the V1 complex of vacuolar(H+)-ATPase (V-ATPase), a multisubunit enzyme composed of a peripheral complex (V1) that hydrolyzes ATP and a membrane integral complex (V0) that translocates protons. V-ATPase is responsible for acidifying and maintaining the pH of intracellular compartments and in some cell types, is targeted to the plasma membrane, where it is responsible for acidifying the extracellular environment. Subunit C is necessary for the assembly of the catalytic sector of the enzyme and is likely to have a specific function in its catalytic activity. The chain is V-type proton ATPase subunit C 2 (Atp6v1c2) from Mus musculus (Mouse).